The primary structure comprises 29 residues: Cytochrome b6-f complex subunit 8 (29 aa).

The helical transmembrane segment at 3-23 (LITITWASVMVAFTFSLSLVV) threads the bilayer.

The protein belongs to the PetN family. As to quaternary structure, the 4 large subunits of the cytochrome b6-f complex are cytochrome b6, subunit IV (17 kDa polypeptide, PetD), cytochrome f and the Rieske protein, while the 4 small subunits are PetG, PetL, PetM and PetN. The complex functions as a dimer.

It is found in the plastid. The protein resides in the chloroplast thylakoid membrane. Functionally, component of the cytochrome b6-f complex, which mediates electron transfer between photosystem II (PSII) and photosystem I (PSI), cyclic electron flow around PSI, and state transitions. This chain is Cytochrome b6-f complex subunit 8, found in Chaetosphaeridium globosum (Charophycean green alga).